We begin with the raw amino-acid sequence, 618 residues long: Glucose starvation modulator protein 1 (618 aa).

A DNA-binding region (zn(2)-C6 fungal-type) is located at residues 20-48; the sequence is CEFCHTKHIQCDVGRPCQNCLKRNIGKFC. The segment at 325-352 is disordered; the sequence is ANANTHPSHNAKLESECDSSSHSDADLE. Over residues 335-352 the composition is skewed to basic and acidic residues; sequence AKLESECDSSSHSDADLE. One can recognise a PAS domain in the interval 466–538; it reads LLDLENMAKL…QIFNELLAFG (73 aa).

The protein belongs to the ERT1/acuK family.

It localises to the nucleus. Its function is as follows. Transcription factor which regulates nonfermentable carbon utilization. Binds specifically to 5'-CGGN(8)CGG-3' and 5'-CGGN(9)CGG-3' sequences in the promoter region. This chain is Glucose starvation modulator protein 1 (GSM1), found in Saccharomyces cerevisiae (strain RM11-1a) (Baker's yeast).